A 685-amino-acid chain; its full sequence is Phenoloxidase subunit 1 (685 aa).

Residues 1–51 (MSDAKNNLLLFFDRPSEPCFMQKGEENAVFEIPDNYYPEKYQRVSNAIGNR) constitute a propeptide that is removed on maturation. Asn184 is a glycosylation site (N-linked (GlcNAc...) asparagine). 3 residues coordinate Cu cation: His209, His213, and His239. Residues Asn254 and Asn324 are each glycosylated (N-linked (GlcNAc...) asparagine). Glu351 serves as the catalytic Proton acceptor. Cu cation is bound by residues His366, His370, and His406. 2 N-linked (GlcNAc...) asparagine glycosylation sites follow: Asn491 and Asn540. 2 cysteine pairs are disulfide-bonded: Cys581-Cys623 and Cys583-Cys630.

Heterodimer. Cu(2+) serves as cofactor. Post-translationally, the N-terminus is blocked. Synthesized by hemocytes and released into the hemolymph plasma.

It is found in the secreted. It catalyses the reaction 2 L-dopa + O2 = 2 L-dopaquinone + 2 H2O. The enzyme catalyses L-tyrosine + O2 = L-dopaquinone + H2O. Its function is as follows. This is a copper-containing oxidase that functions in the formation of pigments such as melanins and other polyphenolic compounds. Catalyzes the rate-limiting conversions of tyrosine to DOPA, DOPA to DOPA-quinone and possibly 5,6 dihydroxyindole to indole-5'6 quinone. This Bombyx mori (Silk moth) protein is Phenoloxidase subunit 1.